A 154-amino-acid chain; its full sequence is Prefoldin subunit alpha (154 aa).

The tract at residues 123–154 (EAEQLEQQAQQAQQQMMQQQMQAQQQPQDGEQ) is disordered. The span at 127–154 (LEQQAQQAQQQMMQQQMQAQQQPQDGEQ) shows a compositional bias: low complexity.

The protein belongs to the prefoldin alpha subunit family. Heterohexamer of two alpha and four beta subunits.

It is found in the cytoplasm. Its function is as follows. Molecular chaperone capable of stabilizing a range of proteins. Seems to fulfill an ATP-independent, HSP70-like function in archaeal de novo protein folding. This Halobacterium salinarum (strain ATCC 29341 / DSM 671 / R1) protein is Prefoldin subunit alpha.